Here is a 61-residue protein sequence, read N- to C-terminus: Probable tautomerase LL0574 (61 aa).

Proline 2 serves as the catalytic Proton acceptor; via imino nitrogen.

This sequence belongs to the 4-oxalocrotonate tautomerase family.

This is Probable tautomerase LL0574 from Lactococcus lactis subsp. lactis (strain IL1403) (Streptococcus lactis).